The primary structure comprises 298 residues: Protoheme IX farnesyltransferase (298 aa).

A run of 9 helical transmembrane segments spans residues 19–39 (VMSL…QPVN), 40–60 (PFVA…SGAL), 91–111 (LAVG…GGNW), 112–132 (FAAG…TIWL), 140–160 (IVIG…LPTG), 167–187 (LLMF…LALF), 213–233 (IFAY…TSVG), 236–256 (LYLA…WQIL), and 277–297 (LSLY…WVGG).

Belongs to the UbiA prenyltransferase family. Protoheme IX farnesyltransferase subfamily. As to quaternary structure, interacts with CtaA.

It is found in the cell inner membrane. It catalyses the reaction heme b + (2E,6E)-farnesyl diphosphate + H2O = Fe(II)-heme o + diphosphate. It functions in the pathway porphyrin-containing compound metabolism; heme O biosynthesis; heme O from protoheme: step 1/1. In terms of biological role, converts heme B (protoheme IX) to heme O by substitution of the vinyl group on carbon 2 of heme B porphyrin ring with a hydroxyethyl farnesyl side group. This Paracoccus denitrificans protein is Protoheme IX farnesyltransferase.